A 971-amino-acid chain; its full sequence is Exportin-2 (971 aa).

Residues 29–102 enclose the Importin N-terminal domain; sequence AEKFLESVEG…KANIVNLMLS (74 aa).

It belongs to the XPO2/CSE1 family. In terms of assembly, interacts with cftr.

The protein localises to the cytoplasm. The protein resides in the nucleus. Export receptor for importin alpha. Mediates importin-alpha re-export from the nucleus to the cytoplasm after import substrates have been released into the nucleoplasm. Negatively regulates fluid secretion and plays a role in fluid homeostasis by down-regulating cftr activity. The polypeptide is Exportin-2 (cse1l) (Oreochromis niloticus (Nile tilapia)).